Reading from the N-terminus, the 1070-residue chain is uncharacterized protein (1070 aa).

In terms of domain architecture, UBA spans 477-523 (LIDTNQLLLRQLQQIVKLGIFNEKKIKEELKANKFNEQVALQILESE).

This is an uncharacterized protein from Sulfolobus islandicus rod-shaped virus 1 (SIRV-1).